The sequence spans 877 residues: (E,E)-geranyllinalool synthase (877 aa).

Mg(2+) is bound by residues aspartate 540 and aspartate 544. 4 residues coordinate substrate: aspartate 540, aspartate 544, arginine 677, and asparagine 680. Residues 540-544 (DDFFD) carry the DDXXD motif motif. Mg(2+)-binding residues include asparagine 680, serine 684, and glutamate 688.

Belongs to the terpene synthase family. Tpsf subfamily. Mg(2+) is required as a cofactor. It depends on Mn(2+) as a cofactor. As to expression, expressed in leaves and flowers.

The protein localises to the cytoplasm. It catalyses the reaction (2E,6E,10E)-geranylgeranyl diphosphate + H2O = (6E,10E)-geranyllinalool + diphosphate. It participates in secondary metabolite biosynthesis; terpenoid biosynthesis. Involved in the biosynthesis of homoterpenes, attractants of herbivores parasitoids and predators (e.g. predatory mites and parasitoid wasps). Involved in diterpene (C20) biosynthesis. Catalyzes the conversion of geranylgeranyl diphosphate to (E,E)-geranyllinalool, the precursor of the insect-induced volatile C16-homoterpene TMTT. This chain is (E,E)-geranyllinalool synthase, found in Arabidopsis thaliana (Mouse-ear cress).